The sequence spans 230 residues: Sugar fermentation stimulation protein homolog (230 aa).

The protein belongs to the SfsA family.

This chain is Sugar fermentation stimulation protein homolog, found in Pyrococcus furiosus (strain ATCC 43587 / DSM 3638 / JCM 8422 / Vc1).